The following is a 467-amino-acid chain: Glutamate--tRNA ligase (467 aa).

Positions 9 to 19 match the 'HIGH' region motif; that stretch reads PSPTGYLHIGG. The short motif at 237 to 241 is the 'KMSKS' region element; sequence KLSKR. An ATP-binding site is contributed by K240.

It belongs to the class-I aminoacyl-tRNA synthetase family. Glutamate--tRNA ligase type 1 subfamily. Monomer.

It localises to the cytoplasm. It carries out the reaction tRNA(Glu) + L-glutamate + ATP = L-glutamyl-tRNA(Glu) + AMP + diphosphate. Its function is as follows. Catalyzes the attachment of glutamate to tRNA(Glu) in a two-step reaction: glutamate is first activated by ATP to form Glu-AMP and then transferred to the acceptor end of tRNA(Glu). In Xanthomonas campestris pv. campestris (strain 8004), this protein is Glutamate--tRNA ligase.